We begin with the raw amino-acid sequence, 429 residues long: Histidine--tRNA ligase (429 aa).

Belongs to the class-II aminoacyl-tRNA synthetase family. In terms of assembly, homodimer.

Its subcellular location is the cytoplasm. It catalyses the reaction tRNA(His) + L-histidine + ATP = L-histidyl-tRNA(His) + AMP + diphosphate + H(+). This is Histidine--tRNA ligase from Stutzerimonas stutzeri (strain A1501) (Pseudomonas stutzeri).